Reading from the N-terminus, the 450-residue chain is Crinkler effector protein 63 (450 aa).

The N-terminal stretch at 1–17 is a signal peptide; that stretch reads MVKLFCAIVGAAGSAFP. The segment at 18-55 is LQLFLAK domain; that stretch reads VDIDAGQSAGDLKDAIKAKNPATITCDAKDLQLSLAKT. Positions 58–117 are DWL domain; sequence GAWLPDDDQAALDLEDGKVHEDIQALIDGEKMKATWTIEDVLTANNMTKRKGRAPKSRQI. N-linked (GlcNAc...) asparagine glycosylation is present at Asn-103. The HVLVXXP motif signature appears at 118–124; sequence HVLVVVP. The interval 125 to 450 is effector domain; that stretch reads EGAFGSASET…RSIPTFSYFS (326 aa). Residues 218 to 224 carry the Nuclear localization signal (NLS) motif; the sequence is QRKRYRR. The N-linked (GlcNAc...) asparagine glycan is linked to Asn-342.

It belongs to the Crinkler effector family. In terms of assembly, forms a homodimer via an inverted association manner. Forms heterodimers with CRN79 and CRN115.

The protein localises to the secreted. Its subcellular location is the host nucleus. It localises to the host nucleoplasm. Functionally, secreted effector that, with CRN115, is critical to pathogenesis by modulating host defenses. Induces cell death in plant host cells. Suppresses callose deposition and affects expression of defense-related genes including two salicylic acid (SA) signal-induced and antimicrobial PR genes (PR1 and PR2), and genes involved in jasmonic acid (JA)/ethylene (ET)-mediated defense pathway (ERF1, ORA59, PDF1.2). CRN115 and CRN63 may share the same molecular host targets that are involved in the cell death signal transduction pathway and that their differential activities are dependent on plant nuclear localization or not. Does not affect MAPK activation and BIK1 phosphorylation and acts downstream of the MAPK cascades in PTI signaling. This chain is Crinkler effector protein 63, found in Phytophthora sojae (strain P6497) (Soybean stem and root rot agent).